Consider the following 479-residue polypeptide: Glutamate--tRNA ligase (479 aa).

Positions 21 to 31 match the 'HIGH' region motif; it reads PSPTGYLHVGG. Positions 248–252 match the 'KMSKS' region motif; the sequence is KLSKR. Lys251 contacts ATP.

It belongs to the class-I aminoacyl-tRNA synthetase family. Glutamate--tRNA ligase type 1 subfamily. As to quaternary structure, monomer.

The protein resides in the cytoplasm. It carries out the reaction tRNA(Glu) + L-glutamate + ATP = L-glutamyl-tRNA(Glu) + AMP + diphosphate. Functionally, catalyzes the attachment of glutamate to tRNA(Glu) in a two-step reaction: glutamate is first activated by ATP to form Glu-AMP and then transferred to the acceptor end of tRNA(Glu). This Haemophilus ducreyi (strain 35000HP / ATCC 700724) protein is Glutamate--tRNA ligase.